The sequence spans 45 residues: Photosystem II reaction center protein K (45 aa).

Residues 1–8 constitute a propeptide that is removed on maturation; it reads MDVNFLLS. The helical transmembrane segment at 20–40 threads the bilayer; sequence IVDVMPAIPVFFLLLAFVWQA.

This sequence belongs to the PsbK family. In terms of assembly, PSII is composed of 1 copy each of membrane proteins PsbA, PsbB, PsbC, PsbD, PsbE, PsbF, PsbH, PsbI, PsbJ, PsbK, PsbL, PsbM, PsbT, PsbX, PsbY, PsbZ, Psb30/Ycf12, at least 3 peripheral proteins of the oxygen-evolving complex and a large number of cofactors. It forms dimeric complexes.

The protein resides in the plastid. The protein localises to the chloroplast thylakoid membrane. In terms of biological role, one of the components of the core complex of photosystem II (PSII). PSII is a light-driven water:plastoquinone oxidoreductase that uses light energy to abstract electrons from H(2)O, generating O(2) and a proton gradient subsequently used for ATP formation. It consists of a core antenna complex that captures photons, and an electron transfer chain that converts photonic excitation into a charge separation. The sequence is that of Photosystem II reaction center protein K from Emiliania huxleyi (Coccolithophore).